A 113-amino-acid polypeptide reads, in one-letter code: Small ribosomal subunit protein bS6 (113 aa).

It belongs to the bacterial ribosomal protein bS6 family.

Its function is as follows. Binds together with bS18 to 16S ribosomal RNA. This is Small ribosomal subunit protein bS6 from Vesicomyosocius okutanii subsp. Calyptogena okutanii (strain HA).